The sequence spans 291 residues: NAD kinase (291 aa).

The active-site Proton acceptor is D72. Residues 72-73 (DG), 146-147 (ND), R157, R174, D176, 187-192 (TAYSLS), and Q247 each bind NAD(+).

This sequence belongs to the NAD kinase family. Requires a divalent metal cation as cofactor.

The protein localises to the cytoplasm. It carries out the reaction NAD(+) + ATP = ADP + NADP(+) + H(+). Involved in the regulation of the intracellular balance of NAD and NADP, and is a key enzyme in the biosynthesis of NADP. Catalyzes specifically the phosphorylation on 2'-hydroxyl of the adenosine moiety of NAD to yield NADP. This is NAD kinase from Hydrogenovibrio crunogenus (strain DSM 25203 / XCL-2) (Thiomicrospira crunogena).